Consider the following 75-residue polypeptide: Protein P8 (75 aa).

A disordered region spans residues 19 to 47 (PMGGMPSIASSSSAETGQQTQSGNFTGGG). The segment covering 26-39 (IASSSSAETGQQTQ) has biased composition (polar residues). The chain crosses the membrane as a helical span at residues 55-72 (NNQLLIVGAVVIGLFLVI).

It localises to the virion membrane. The polypeptide is Protein P8 (VIII) (Pseudoalteromonas phage PM2 (Bacteriophage PM2)).